We begin with the raw amino-acid sequence, 289 residues long: Ribosomal protein L11 methyltransferase (289 aa).

Thr134, Gly155, Asp177, and Asn225 together coordinate S-adenosyl-L-methionine.

The protein belongs to the methyltransferase superfamily. PrmA family.

The protein resides in the cytoplasm. The catalysed reaction is L-lysyl-[protein] + 3 S-adenosyl-L-methionine = N(6),N(6),N(6)-trimethyl-L-lysyl-[protein] + 3 S-adenosyl-L-homocysteine + 3 H(+). In terms of biological role, methylates ribosomal protein L11. This chain is Ribosomal protein L11 methyltransferase, found in Parasynechococcus marenigrum (strain WH8102).